Here is a 153-residue protein sequence, read N- to C-terminus: MSKHSLIENLKEQIEPIAEGLDYELYHIEFVKEGKENYLRIYIDSENGVSLEGCEKVSRAVSELLDDIDPIQESYYLEVSSPGIDRVLYTDKHLEKYKGYNIVLNLYSAIDKKKKYEGELVDFNENEIDIKVEENIVTIPREKISKTTLKGEL.

It belongs to the RimP family.

The protein resides in the cytoplasm. Required for maturation of 30S ribosomal subunits. In Clostridium botulinum (strain Langeland / NCTC 10281 / Type F), this protein is Ribosome maturation factor RimP.